Consider the following 408-residue polypeptide: Arginine biosynthesis bifunctional protein ArgJ (408 aa).

6 residues coordinate substrate: threonine 156, lysine 182, threonine 193, glutamate 279, asparagine 403, and serine 408. Residue threonine 193 is the Nucleophile of the active site.

The protein belongs to the ArgJ family. As to quaternary structure, heterotetramer of two alpha and two beta chains.

Its subcellular location is the cytoplasm. It catalyses the reaction N(2)-acetyl-L-ornithine + L-glutamate = N-acetyl-L-glutamate + L-ornithine. The catalysed reaction is L-glutamate + acetyl-CoA = N-acetyl-L-glutamate + CoA + H(+). Its pathway is amino-acid biosynthesis; L-arginine biosynthesis; L-ornithine and N-acetyl-L-glutamate from L-glutamate and N(2)-acetyl-L-ornithine (cyclic): step 1/1. It participates in amino-acid biosynthesis; L-arginine biosynthesis; N(2)-acetyl-L-ornithine from L-glutamate: step 1/4. Catalyzes two activities which are involved in the cyclic version of arginine biosynthesis: the synthesis of N-acetylglutamate from glutamate and acetyl-CoA as the acetyl donor, and of ornithine by transacetylation between N(2)-acetylornithine and glutamate. The polypeptide is Arginine biosynthesis bifunctional protein ArgJ (Bordetella bronchiseptica (strain ATCC BAA-588 / NCTC 13252 / RB50) (Alcaligenes bronchisepticus)).